The sequence spans 548 residues: Aspergilol synthase AuAP450 (548 aa).

Residues proline 38–serine 58 form a helical membrane-spanning segment. Cysteine 489 contacts heme.

The protein belongs to the cytochrome P450 family. Heme serves as cofactor.

Its subcellular location is the membrane. It participates in secondary metabolite biosynthesis; terpenoid biosynthesis. Functionally, cytochrome P450 monooxygenase; part of the gene cluster that mediates the biosynthesis of aspergiltriene A, aspergildienes A-D and aspergilols A-D. The bifunctional terpene synthase AuAS converts DMAPP and IPP into sesterterpenes. The C-terminal prenyltransferase (PT) domain of AuAS catalyzes formation of GFPP, whereas the N-terminal terpene cyclase (TC) domain catalyzes the cyclization of GFPP into 5 distinct sesterterpenes: aspergiltriene A, aspergildiene A, aspergildiene B, aspergildiene C and aspergildiene D. The cytochrome P450 monooxygenase AP450 then hydroxylates the aspergildienes A, B, C and D to yield the corresponding sesterterpene alcohols, aspergilols A-D. This chain is Aspergilol synthase AuAP450, found in Aspergillus ustus.